Reading from the N-terminus, the 1288-residue chain is CLIP-associating protein 2 (1288 aa).

The segment at 1–62 (MALSLSQDRS…AAKSGASKEG (62 aa)) is disordered. Low complexity-rich tracts occupy residues 19–32 (GSRP…FKVP) and 40–62 (ESAS…SKEG). Positions 62 to 312 (GAGAVDEEDF…RTLQSCLKSS (251 aa)) are TOG 1. 3 HEAT repeats span residues 174-209 (HGAE…IRHT), 210-246 (HVPR…EWQT), and 251-288 (RHAA…HFPG). Disordered regions lie at residues 314 to 571 (SVAS…SSRL) and 614 to 634 (ANSD…NGSI). Low complexity-rich tracts occupy residues 317–337 (SLPQ…RPLS) and 347–358 (PAGSKSSGSPAS). Composition is skewed to polar residues over residues 406–421 (KQTL…SQVD) and 468–478 (TALSTLSTGAQ). An SXIP motif 1 motif is present at residues 490 to 493 (SRIP). Residues 496–518 (QGCSRDSSPTRLSVAPSNISHIY) are compositionally biased toward polar residues. An SXIP motif 2 motif is present at residues 527–530 (SRIP). Residues 616–630 (SDASSACSERSYSSR) are compositionally biased toward low complexity. A TOG 2 region spans residues 638–889 (MRQTEDVAEV…TKLLQNHLRN (252 aa)). HEAT repeat units lie at residues 718-755 (RVFS…KMGA) and 780-817 (LQFT…QMEP). Residues 891 to 900 (GNTAQASIGS) show a composition bias toward polar residues. 2 disordered regions span residues 891-936 (GNTA…FDYD) and 960-1047 (SVRS…DSGV). Positions 912-931 (SWSSPLTSPTNTSQNTPSPS) are enriched in low complexity. A compositionally biased stretch (basic and acidic residues) spans 963-977 (SQEDMTEPPRKREGD). Positions 1019–1030 (SDSSFGSSSFNK) are enriched in low complexity. A compositionally biased stretch (acidic residues) spans 1036–1046 (DQEESLTDDSG). 4 HEAT repeats span residues 1047-1086 (VDQS…ETQL), 1091-1128 (EHFK…RQPW), 1167-1204 (ISPD…RLPK), and 1209-1246 (QMLP…VIGE).

The protein belongs to the CLASP family. Interacts with microtubules.

The protein localises to the cytoplasm. It localises to the cytoskeleton. The protein resides in the microtubule organizing center. Its subcellular location is the centrosome. It is found in the chromosome. The protein localises to the centromere. It localises to the kinetochore. The protein resides in the spindle. Its subcellular location is the golgi apparatus. It is found in the trans-Golgi network. The protein localises to the cell membrane. It localises to the cell projection. The protein resides in the ruffle membrane. Functionally, microtubule plus-end tracking protein that promotes the stabilization of dynamic microtubules. Involved in the nucleation of noncentrosomal microtubules originating from the trans-Golgi network (TGN). Required for the polarization of the cytoplasmic microtubule arrays in migrating cells towards the leading edge of the cell. May act at the cell cortex to enhance the frequency of rescue of depolymerizing microtubules. This cortical microtubule stabilizing activity is regulated at least in part by phosphatidylinositol 3-kinase signaling. Also performs a similar stabilizing function at the kinetochore which is essential for the bipolar alignment of chromosomes on the mitotic spindle. The polypeptide is CLIP-associating protein 2 (clasp2) (Danio rerio (Zebrafish)).